We begin with the raw amino-acid sequence, 284 residues long: Tropomyosin (284 aa).

At M1 the chain carries N-acetylmethionine. The segment at 1–42 is disordered; that stretch reads MDAIKKKMQAMKLEKDNAMDRADTLEQQNKEANNRAEKSEEE. The stretch at 1 to 284 forms a coiled coil; that stretch reads MDAIKKKMQA…DQTFSELSGY (284 aa). Basic and acidic residues predominate over residues 12 to 38; it reads KLEKDNAMDRADTLEQQNKEANNRAEK.

This sequence belongs to the tropomyosin family. In terms of assembly, homodimer.

Its function is as follows. Tropomyosin, in association with the troponin complex, plays a central role in the calcium dependent regulation of muscle contraction. This chain is Tropomyosin, found in Pandalus borealis (Northern red shrimp).